Here is a 365-residue protein sequence, read N- to C-terminus: tRNA(Met) cytidine acetate ligase (365 aa).

ATP contacts are provided by residues 7–20, glycine 96, asparagine 152, and arginine 175; that span reads IAEF…HKYL.

It belongs to the TmcAL family.

Its subcellular location is the cytoplasm. It carries out the reaction cytidine(34) in elongator tRNA(Met) + acetate + ATP = N(4)-acetylcytidine(34) in elongator tRNA(Met) + AMP + diphosphate. In terms of biological role, catalyzes the formation of N(4)-acetylcytidine (ac(4)C) at the wobble position of elongator tRNA(Met), using acetate and ATP as substrates. First activates an acetate ion to form acetyladenylate (Ac-AMP) and then transfers the acetyl group to tRNA to form ac(4)C34. The protein is tRNA(Met) cytidine acetate ligase of Streptococcus pneumoniae (strain ATCC 700669 / Spain 23F-1).